A 773-amino-acid chain; its full sequence is DNA gyrase subunit B (773 aa).

The Toprim domain occupies 416–530; sequence SEIFLVEGDS…QGHVYIAQAP (115 aa). Positions 422, 495, and 497 each coordinate Mg(2+).

The protein belongs to the type II topoisomerase GyrB family. As to quaternary structure, heterotetramer, composed of two GyrA and two GyrB chains. In the heterotetramer, GyrA contains the active site tyrosine that forms a transient covalent intermediate with DNA, while GyrB binds cofactors and catalyzes ATP hydrolysis. The cofactor is Mg(2+). It depends on Mn(2+) as a cofactor. Requires Ca(2+) as cofactor.

The protein localises to the cytoplasm. It catalyses the reaction ATP-dependent breakage, passage and rejoining of double-stranded DNA.. Functionally, a type II topoisomerase that negatively supercoils closed circular double-stranded (ds) DNA in an ATP-dependent manner to modulate DNA topology and maintain chromosomes in an underwound state. Negative supercoiling favors strand separation, and DNA replication, transcription, recombination and repair, all of which involve strand separation. Also able to catalyze the interconversion of other topological isomers of dsDNA rings, including catenanes and knotted rings. Type II topoisomerases break and join 2 DNA strands simultaneously in an ATP-dependent manner. This Helicobacter pylori (strain ATCC 700392 / 26695) (Campylobacter pylori) protein is DNA gyrase subunit B.